The primary structure comprises 39 residues: MAGTGRIPLWLVATVGGMAAITVLGIFIYGSYSGVGSSL.

A helical membrane pass occupies residues 9 to 29; that stretch reads LWLVATVGGMAAITVLGIFIY.

This sequence belongs to the PsbJ family. In terms of assembly, PSII is composed of 1 copy each of membrane proteins PsbA, PsbB, PsbC, PsbD, PsbE, PsbF, PsbH, PsbI, PsbJ, PsbK, PsbL, PsbM, PsbT, PsbX, PsbY, PsbZ, Psb30/Ycf12, at least 3 peripheral proteins of the oxygen-evolving complex and a large number of cofactors. It forms dimeric complexes.

Its subcellular location is the plastid. The protein resides in the chloroplast thylakoid membrane. Its function is as follows. One of the components of the core complex of photosystem II (PSII). PSII is a light-driven water:plastoquinone oxidoreductase that uses light energy to abstract electrons from H(2)O, generating O(2) and a proton gradient subsequently used for ATP formation. It consists of a core antenna complex that captures photons, and an electron transfer chain that converts photonic excitation into a charge separation. The polypeptide is Photosystem II reaction center protein J (Porphyra purpurea (Red seaweed)).